The sequence spans 1104 residues: Receptor-type guanylate cyclase gcy-15 (1104 aa).

Topologically, residues 1–431 are extracellular; sequence MEIAINRLNA…ENCGPPANNT (431 aa). Asn-43, Asn-237, Asn-263, Asn-287, Asn-407, and Asn-429 each carry an N-linked (GlcNAc...) asparagine glycan. Residues 432–452 form a helical membrane-spanning segment; it reads FIIVISVGVAVLIGLAIAAAF. Topologically, residues 453–1104 are cytoplasmic; the sequence is LYKRYRYERR…QIQEKTYEFS (652 aa). Residues 528 to 823 form the Protein kinase domain; sequence FNTGSTARAG…QIKRKLKPLT (296 aa). Residues 534–542 and Lys-576 contribute to the ATP site; that span reads ARAGPFGPI. Positions 838-871 form a coiled coil; the sequence is IEKYTDKLEKDIAERNEELEAEKAKSEALLKMML. The 131-residue stretch at 894 to 1024 folds into the Guanylate cyclase domain; it reads TVFFSDCPGF…DTVNTASRME (131 aa).

The protein belongs to the adenylyl cyclase class-4/guanylyl cyclase family. As to expression, expressed bilaterally in ASG sensory neurons.

Its subcellular location is the cell membrane. The catalysed reaction is GTP = 3',5'-cyclic GMP + diphosphate. Guanylate cyclase involved in the production of the second messenger cGMP. The chain is Receptor-type guanylate cyclase gcy-15 from Caenorhabditis elegans.